A 128-amino-acid chain; its full sequence is MSDVFDIIRFNDQGLVTAIAQQHDTGEVLMLAWMNREAIEETLATGRVCYFSRSRNGLWRKGETSGQVQTLIELRVDCDGDALLVLVDQPGVACHTGRRSCFYRAMGKDGTVTTLTEPLIDPHTLYGS.

D77 serves as a coordination point for Mg(2+). C78 provides a ligand contact to Zn(2+). Mg(2+) contacts are provided by D79 and D81. C94 and C101 together coordinate Zn(2+).

This sequence belongs to the PRA-CH family. In terms of assembly, homodimer. Mg(2+) is required as a cofactor. Requires Zn(2+) as cofactor.

It is found in the cytoplasm. It catalyses the reaction 1-(5-phospho-beta-D-ribosyl)-5'-AMP + H2O = 1-(5-phospho-beta-D-ribosyl)-5-[(5-phospho-beta-D-ribosylamino)methylideneamino]imidazole-4-carboxamide. The protein operates within amino-acid biosynthesis; L-histidine biosynthesis; L-histidine from 5-phospho-alpha-D-ribose 1-diphosphate: step 3/9. Functionally, catalyzes the hydrolysis of the adenine ring of phosphoribosyl-AMP. The sequence is that of Phosphoribosyl-AMP cyclohydrolase from Granulibacter bethesdensis (strain ATCC BAA-1260 / CGDNIH1).